An 82-amino-acid polypeptide reads, in one-letter code: RNA-binding protein Hfq (82 aa).

The region spanning 11–71 (DTFLNHVRKT…ISTIMPGAPI (61 aa)) is the Sm domain.

The protein belongs to the Hfq family. Homohexamer.

Functionally, RNA chaperone that binds small regulatory RNA (sRNAs) and mRNAs to facilitate mRNA translational regulation in response to envelope stress, environmental stress and changes in metabolite concentrations. Also binds with high specificity to tRNAs. This chain is RNA-binding protein Hfq, found in Bradyrhizobium diazoefficiens (strain JCM 10833 / BCRC 13528 / IAM 13628 / NBRC 14792 / USDA 110).